Here is a 1064-residue protein sequence, read N- to C-terminus: Tail spike protein (1064 aa).

BNR repeat units follow at residues 360 to 371 and 496 to 503; these read VKSGDDGQTWST and NAGKNWHM. Active-site residues include glutamate 581 and arginine 596. One copy of the BNR 3 repeat lies at 608–619; it reads HRSRDIGQTWES. Residue arginine 647 is part of the active site. Residues 911-1064 enclose the Peptidase S74 domain; that stretch reads SNGERKTEPV…EARLSALEQK (154 aa). The stretch at 1044–1064 forms a coiled coil; it reads AAYQRRKLERIEARLSALEQK.

This sequence belongs to the glycosyl hydrolase 58 family. In terms of assembly, homotrimer. Interacts with sialic acid. Proteolytic cleavage and release of the chaperone in the host cytosol stabilizes the folded protein. The cleavage gives rise to the mature tail spike protein but is not essential for catalytic activity. However, release of the chaperone domain confers kinetic stability and processivity to the endosialidase.

It localises to the virion. The catalysed reaction is Endohydrolysis of (2-&gt;8)-alpha-sialosyl linkages in oligo- or poly(sialic) acids.. Functionally, receptor binding protein, which mediates the attachment to the host capsule. Degrades the alpha-2,8-linked polysialic acid of E.coli K1 capsule by cleaving within the polymer chain of polysialic acid. Its function is as follows. The C-terminal chaperone protein mediates homotrimerization and proper folding of the catalytic endo-N trimer. This Escherichia coli (Bacteriophage K1F) protein is Tail spike protein.